We begin with the raw amino-acid sequence, 195 residues long: Large ribosomal subunit protein uL5 (195 aa).

The protein belongs to the universal ribosomal protein uL5 family. In terms of assembly, part of the 50S ribosomal subunit; part of the 5S rRNA/L5/L18/L25 subcomplex. Contacts the 5S rRNA and the P site tRNA. Forms a bridge to the 30S subunit in the 70S ribosome.

In terms of biological role, this is one of the proteins that bind and probably mediate the attachment of the 5S RNA into the large ribosomal subunit, where it forms part of the central protuberance. In the 70S ribosome it contacts protein S13 of the 30S subunit (bridge B1b), connecting the 2 subunits; this bridge is implicated in subunit movement. Contacts the P site tRNA; the 5S rRNA and some of its associated proteins might help stabilize positioning of ribosome-bound tRNAs. In Chlorobium chlorochromatii (strain CaD3), this protein is Large ribosomal subunit protein uL5.